The chain runs to 159 residues: Ribosomal RNA large subunit methyltransferase H (159 aa).

S-adenosyl-L-methionine contacts are provided by residues Leu76, Gly108, and 127–132 (LSKMTY).

This sequence belongs to the RNA methyltransferase RlmH family. In terms of assembly, homodimer.

The protein resides in the cytoplasm. The catalysed reaction is pseudouridine(1915) in 23S rRNA + S-adenosyl-L-methionine = N(3)-methylpseudouridine(1915) in 23S rRNA + S-adenosyl-L-homocysteine + H(+). In terms of biological role, specifically methylates the pseudouridine at position 1915 (m3Psi1915) in 23S rRNA. The sequence is that of Ribosomal RNA large subunit methyltransferase H from Ruminiclostridium cellulolyticum (strain ATCC 35319 / DSM 5812 / JCM 6584 / H10) (Clostridium cellulolyticum).